Reading from the N-terminus, the 257-residue chain is Ribonuclease HII (257 aa).

The 186-residue stretch at 72–257 (TYIAGIDEVG…FAPIKDMIQK (186 aa)) folds into the RNase H type-2 domain. A divalent metal cation contacts are provided by Asp-78, Glu-79, and Asp-170.

The protein belongs to the RNase HII family. It depends on Mn(2+) as a cofactor. The cofactor is Mg(2+).

It is found in the cytoplasm. It catalyses the reaction Endonucleolytic cleavage to 5'-phosphomonoester.. Its function is as follows. Endonuclease that specifically degrades the RNA of RNA-DNA hybrids. This Bacillus mycoides (strain KBAB4) (Bacillus weihenstephanensis) protein is Ribonuclease HII.